Reading from the N-terminus, the 535-residue chain is T-box transcription factor TBX21 (535 aa).

The interval 1-62 is disordered; sequence MGIVEPGCGD…SLGSPYPGGA (62 aa). Position 53 is a phosphoserine (Ser53). Tyr77 carries the post-translational modification Phosphotyrosine. The disordered stretch occupies residues 83–109; the sequence is AAGFPGAGESFPPPADAEGYQPGEGYA. Phosphotyrosine is present on Tyr118. A DNA-binding region (T-box) is located at residues 141-326; it reads LNNHLLWSKF…NNPFAKGFRE (186 aa). At Tyr220 the chain carries Phosphotyrosine; by ABL1. At Ser225 the chain carries Phosphoserine. Tyr266 carries the post-translational modification Phosphotyrosine; by ABL1. Thr303 carries the post-translational modification Phosphothreonine. Residue Tyr305 is modified to Phosphotyrosine; by ABL1. A Glycyl lysine isopeptide (Lys-Gly) (interchain with G-Cter in ubiquitin) cross-link involves residue Lys314. Residues 449–535 are disordered; that stretch reads RPMRTLPMEP…EGQFYNYFPN (87 aa). Low complexity predominate over residues 503-520; the sequence is SPYPSSGDSSSPAGAPSP. Ser513 carries the post-translational modification Phosphoserine. Tyr530 is modified (phosphotyrosine; by ITK).

As to quaternary structure, interacts with RUNX1, RUNX3, ITK, ABL1, RELA, CDK9 and KDM6B. The phosphorylated form (at Thr-303) interacts with NFATC2. Interacts with SMARCA4 in a KDM6B-dependent manner. Interacts with CCTN1. Interacts with USP10. The phosphorylated form (at Tyr-530) interacts with GATA3. Post-translationally, phosphorylations at Ser-53, Tyr-77, Ser-225 and Ser-513 are regulated by mTORC1. Phosphorylation at Tyr-530 is essential for its interaction GATA3. Phosphorylation at Tyr-220, Tyr-266 and Tyr-305 enhances its transcriptional activator activity. Phosphorylation at Thr-303 is required for its interaction with NFATC2. Ubiquitinated at Lys-314, leading to its degradation by the proteasome. Ubiquitination is essential for controlling protein stability, binding to the T-box-binding element of the IFN-gamma promoter, and for interaction with NFATC2 through induction of phosphorylation at Thr-303. Deubiquitinated by USP10 leading to its stabilization. As to expression, T-cell specific.

Its subcellular location is the nucleus. Functionally, lineage-defining transcription factor which initiates Th1 lineage development from naive Th precursor cells both by activating Th1 genetic programs and by repressing the opposing Th2 and Th17 genetic programs. Activates transcription of a set of genes important for Th1 cell function, including those encoding IFN-gamma and the chemokine receptor CXCR3. Induces permissive chromatin accessibilty and CpG methylation in IFNG. Activates IFNG and CXCR3 genes in part by recruiting chromatin remodeling complexes including KDM6B, a SMARCA4-containing SWI/SNF-complex, and an H3K4me2-methyltransferase complex to their promoters and all of these complexes serve to establish a more permissive chromatin state conducive with transcriptional activation. Can activate Th1 genes also via recruitment of Mediator complex and P-TEFb (composed of CDK9 and CCNT1/cyclin-T1) in the form of the super elongation complex (SEC) to super-enhancers and associated genes in activated Th1 cells. Inhibits the Th17 cell lineage commitment by blocking RUNX1-mediated transactivation of Th17 cell-specific transcriptinal regulator RORC. Inhibits the Th2 cell lineage commitment by suppressing the production of Th2 cytokines, such as IL-4, IL-5, and IL- 13, via repression of transcriptional regulators GATA3 and NFATC2. Protects Th1 cells from amplifying aberrant type-I IFN response in an IFN-gamma abundant microenvironment by acting as a repressor of type-I IFN transcription factors and type-I IFN-stimulated genes. Acts as a regulator of antiviral B-cell responses; controls chronic viral infection by promoting the antiviral antibody IgG2a isotype switching and via regulation of a broad antiviral gene expression program. Required for the correct development of natural killer (NK) and mucosal-associated invariant T (MAIT) cells. In Homo sapiens (Human), this protein is T-box transcription factor TBX21 (TBX21).